We begin with the raw amino-acid sequence, 263 residues long: Ribosomal RNA large subunit methyltransferase E (263 aa).

5 residues coordinate S-adenosyl-L-methionine: glycine 50, tryptophan 52, aspartate 68, asparagine 84, and aspartate 109. Lysine 149 serves as the catalytic Proton acceptor. The region spanning 196–254 (PLRKGDKFVVDIEKLGSSGDGAVLIEGFVVFVKEVEVGEKVRIKITDVKPNFAFADVAE) is the TRAM domain.

It belongs to the class I-like SAM-binding methyltransferase superfamily. RNA methyltransferase RlmE family.

Its subcellular location is the cytoplasm. The enzyme catalyses uridine(2552) in 23S rRNA + S-adenosyl-L-methionine = 2'-O-methyluridine(2552) in 23S rRNA + S-adenosyl-L-homocysteine + H(+). Specifically methylates the uridine in position 2552 of 23S rRNA at the 2'-O position of the ribose in the fully assembled 50S ribosomal subunit. The polypeptide is Ribosomal RNA large subunit methyltransferase E (Methanosarcina barkeri (strain Fusaro / DSM 804)).